The chain runs to 504 residues: Maturase K (504 aa).

This sequence belongs to the intron maturase 2 family. MatK subfamily.

The protein resides in the plastid. It is found in the chloroplast. Functionally, usually encoded in the trnK tRNA gene intron. Probably assists in splicing its own and other chloroplast group II introns. The chain is Maturase K from Actinidia chinensis (Kiwi).